We begin with the raw amino-acid sequence, 790 residues long: Penicillin-binding protein 1A (790 aa).

Residues 1 to 6 are Cytoplasmic-facing; that stretch reads MYKSLF. The chain crosses the membrane as a helical; Signal-anchor for type II membrane protein span at residues 7 to 27; that stretch reads FCLKIFAVLILVGCGITAYII. Residues 28 to 790 are Periplasmic-facing; it reads YHYSRDLPDY…SKEDQSQEIY (763 aa). Residues 49–220 are transglycosylase; the sequence is TRIYSHDGKL…SELNPERNYA (172 aa). Residue glutamate 87 is the Proton donor; for transglycosylase activity of the active site. Residues 398 to 711 are transpeptidase; that stretch reads DVIVVEPIKD…SNVVLPIFID (314 aa). Catalysis depends on serine 457, which acts as the Acyl-ester intermediate; for transpeptidase activity.

This sequence in the N-terminal section; belongs to the glycosyltransferase 51 family. It in the C-terminal section; belongs to the transpeptidase family.

The protein localises to the cell inner membrane. It catalyses the reaction [GlcNAc-(1-&gt;4)-Mur2Ac(oyl-L-Ala-gamma-D-Glu-L-Lys-D-Ala-D-Ala)](n)-di-trans,octa-cis-undecaprenyl diphosphate + beta-D-GlcNAc-(1-&gt;4)-Mur2Ac(oyl-L-Ala-gamma-D-Glu-L-Lys-D-Ala-D-Ala)-di-trans,octa-cis-undecaprenyl diphosphate = [GlcNAc-(1-&gt;4)-Mur2Ac(oyl-L-Ala-gamma-D-Glu-L-Lys-D-Ala-D-Ala)](n+1)-di-trans,octa-cis-undecaprenyl diphosphate + di-trans,octa-cis-undecaprenyl diphosphate + H(+). The enzyme catalyses Preferential cleavage: (Ac)2-L-Lys-D-Ala-|-D-Ala. Also transpeptidation of peptidyl-alanyl moieties that are N-acyl substituents of D-alanine.. It functions in the pathway cell wall biogenesis; peptidoglycan biosynthesis. Cell wall formation. Synthesis of cross-linked peptidoglycan from the lipid intermediates. The enzyme has a penicillin-insensitive transglycosylase N-terminal domain (formation of linear glycan strands) and a penicillin-sensitive transpeptidase C-terminal domain (cross-linking of the peptide subunits). In Rickettsia felis (strain ATCC VR-1525 / URRWXCal2) (Rickettsia azadi), this protein is Penicillin-binding protein 1A (mrcA).